Here is a 225-residue protein sequence, read N- to C-terminus: Ribosomal RNA large subunit methyltransferase E (225 aa).

S-adenosyl-L-methionine contacts are provided by Gly79, Trp81, Asp97, Asp113, and Asp137. Lys177 serves as the catalytic Proton acceptor.

The protein belongs to the class I-like SAM-binding methyltransferase superfamily. RNA methyltransferase RlmE family.

It localises to the cytoplasm. The catalysed reaction is uridine(2552) in 23S rRNA + S-adenosyl-L-methionine = 2'-O-methyluridine(2552) in 23S rRNA + S-adenosyl-L-homocysteine + H(+). In terms of biological role, specifically methylates the uridine in position 2552 of 23S rRNA at the 2'-O position of the ribose in the fully assembled 50S ribosomal subunit. This chain is Ribosomal RNA large subunit methyltransferase E, found in Acidiphilium cryptum (strain JF-5).